The primary structure comprises 3227 residues: E3 ubiquitin-protein ligase ptr1 (3227 aa).

4 disordered regions span residues 1806 to 1836, 1869 to 1894, 1908 to 1929, and 2577 to 2607; these read SGAA…PPDL, MEFE…VMYS, QDAS…GDVI, and ATTG…KDKK. The span at 1811 to 1823 shows a compositional bias: low complexity; the sequence is DSMGDQSLSSSSE. Over residues 1883 to 1894 the composition is skewed to acidic residues; it reads VSEDDADDVMYS. The span at 2577–2601 shows a compositional bias: polar residues; it reads ATTGYTNDQDSRGSTVPKQDPGTTA. The HECT domain maps to 2891–3227; the sequence is DADEVKFSKL…NEGSEGFGFA (337 aa). Residue cysteine 3194 is the Glycyl thioester intermediate of the active site.

It belongs to the UPL family. TOM1/PTR1 subfamily.

It is found in the nucleus. It catalyses the reaction S-ubiquitinyl-[E2 ubiquitin-conjugating enzyme]-L-cysteine + [acceptor protein]-L-lysine = [E2 ubiquitin-conjugating enzyme]-L-cysteine + N(6)-ubiquitinyl-[acceptor protein]-L-lysine.. The protein operates within protein modification; protein ubiquitination. Functionally, probable ubiquitin ligase protein involved in mRNA export. E3 ubiquitin ligase proteins mediate ubiquitination and subsequent proteasomal degradation of target proteins. Probably participates in mRNA export from the nucleus by regulating the transport of hnRNP proteins such as rae1. This chain is E3 ubiquitin-protein ligase ptr1 (ptr1), found in Schizosaccharomyces pombe (strain 972 / ATCC 24843) (Fission yeast).